A 485-amino-acid polypeptide reads, in one-letter code: E3 ubiquitin-protein ligase TRIM58 (485 aa).

Residues 15–59 (CSVCLDFLQEPISVDCGHSFCLRCISEFCEKSDSAQGVYACPQCR) form an RING-type zinc finger. The B box-type zinc-finger motif lies at 90–131 (AGSRQCARHGEDLSHFCEEDQTMLCWVCDTSPEHRSHRTETL). Zn(2+) contacts are provided by C95, H98, C117, and H123. Residues 192 to 241 (LAQEEQLQLRRLEEEERATLQRLRDSRNRLAQQNKALKELAEELEERSQR) adopt a coiled-coil conformation. One can recognise a B30.2/SPRY domain in the interval 271–466 (DLKTVCRIPG…LPPMTEAAPG (196 aa)).

The protein belongs to the TRIM/RBCC family. As to expression, expressed in erythroblasts.

It carries out the reaction S-ubiquitinyl-[E2 ubiquitin-conjugating enzyme]-L-cysteine + [acceptor protein]-L-lysine = [E2 ubiquitin-conjugating enzyme]-L-cysteine + N(6)-ubiquitinyl-[acceptor protein]-L-lysine.. It participates in protein modification; protein ubiquitination. In terms of biological role, E3 ubiquitin ligase induced during late erythropoiesis. Directly binds and ubiquitinates the intermediate chain of the microtubule motor dynein (DYNC1LI1/DYNC1LI2), stimulating the degradation of the dynein holoprotein complex. May participate in the erythroblast enucleation process through regulation of nuclear polarization. The protein is E3 ubiquitin-protein ligase TRIM58 (Trim58) of Mus musculus (Mouse).